Reading from the N-terminus, the 572-residue chain is Glutamate--tRNA ligase (572 aa).

The short motif at 107–117 is the 'HIGH' region element; the sequence is PNPDGAFHLGN.

Belongs to the class-I aminoacyl-tRNA synthetase family. Glutamate--tRNA ligase type 2 subfamily.

The protein localises to the cytoplasm. It catalyses the reaction tRNA(Glu) + L-glutamate + ATP = L-glutamyl-tRNA(Glu) + AMP + diphosphate. Its function is as follows. Catalyzes the attachment of glutamate to tRNA(Glu) in a two-step reaction: glutamate is first activated by ATP to form Glu-AMP and then transferred to the acceptor end of tRNA(Glu). This is Glutamate--tRNA ligase from Pyrococcus furiosus (strain ATCC 43587 / DSM 3638 / JCM 8422 / Vc1).